We begin with the raw amino-acid sequence, 633 residues long: Beta-myrcene synthase TPS15CT (633 aa).

Residues 1 to 55 constitute a chloroplast transit peptide; it reads MHCMAVHQFSPSIVSSLPTISTYNNNHFCRFFTPKTSISPISKTKSKSSTCYPIQ. Arg344, Asp381, Asp385, Arg525, and Asp528 together coordinate (2E)-geranyl diphosphate. Residues Asp381 and Asp385 each coordinate Mg(2+). Residues 381–385 carry the DDXXD motif motif; it reads DDIYD. Asp528, Thr532, and Glu536 together coordinate Mg(2+).

Belongs to the terpene synthase family. Tpsb subfamily. The cofactor is Mg(2+). Requires Mn(2+) as cofactor.

The protein localises to the plastid. Its subcellular location is the chloroplast. It catalyses the reaction (2E)-geranyl diphosphate = beta-myrcene + diphosphate. It functions in the pathway secondary metabolite biosynthesis; terpenoid biosynthesis. Involved in monoterpene (C10) olefins biosynthesis, constituants of cannabinoids and terpenoids-rich resins. Catalyzes strictly the conversion of (2E)-geranyl diphosphate to beta-myrcene. The polypeptide is Beta-myrcene synthase TPS15CT (Cannabis sativa (Hemp)).